We begin with the raw amino-acid sequence, 433 residues long: MCFSPILEINMQSESNITVRDDIDDINTNMYQPLSYPLSFQVSLTGFLMLEIVLGLGSNLTVLVLYCMKSNLINSVSNIITMNLHVLDVIICVGCIPLTIVILLLSLESNTALICCFHEACVSFASVSTAINVFAITLDRYDISVKPANRILTMGRAVMLMISIWIFSFFSFLIPFIEVNFFSLQSGNTWENKTLLCVSTNEYYTELGMYYHLLVQIPIFFFTVVVMLITYTKILQALNIRIGTRFSTGQKKKARKKKTISLTTQHEATDMSQSSGGRNVVFGVRTSVSVIIALRRAVKRHRERRERQKRVFRMSLLIISTFLLCWTPISVLNTTILCLGPSDLLVKLRLCFLVMAYGTTIFHPLLYAFTRQKFQKVLKSKMKKRVVSIVEADPLPNNAVIHNSWIDPKRNKKITFEDSEIREKCLVPQVVTD.

Topologically, residues 1 to 45 (MCFSPILEINMQSESNITVRDDIDDINTNMYQPLSYPLSFQVSLT) are extracellular. A glycan (N-linked (GlcNAc...) asparagine) is linked at Asn16. Residues 46 to 66 (GFLMLEIVLGLGSNLTVLVLY) traverse the membrane as a helical segment. At 67 to 85 (CMKSNLINSVSNIITMNLH) the chain is on the cytoplasmic side. Residues 86 to 106 (VLDVIICVGCIPLTIVILLLS) traverse the membrane as a helical segment. The Extracellular segment spans residues 107-115 (LESNTALIC). The chain crosses the membrane as a helical span at residues 116–136 (CFHEACVSFASVSTAINVFAI). Over 137–156 (TLDRYDISVKPANRILTMGR) the chain is Cytoplasmic. Residues 157 to 177 (AVMLMISIWIFSFFSFLIPFI) traverse the membrane as a helical segment. Residues 178–208 (EVNFFSLQSGNTWENKTLLCVSTNEYYTELG) lie on the Extracellular side of the membrane. Residue Asn192 is glycosylated (N-linked (GlcNAc...) asparagine). The chain crosses the membrane as a helical span at residues 209–229 (MYYHLLVQIPIFFFTVVVMLI). Residues 230-315 (TYTKILQALN…ERQKRVFRMS (86 aa)) are Cytoplasmic-facing. The helical transmembrane segment at 316-336 (LLIISTFLLCWTPISVLNTTI) threads the bilayer. Topologically, residues 337–349 (LCLGPSDLLVKLR) are extracellular. A helical transmembrane segment spans residues 350-370 (LCFLVMAYGTTIFHPLLYAFT). Topologically, residues 371 to 433 (RQKFQKVLKS…KCLVPQVVTD (63 aa)) are cytoplasmic.

Belongs to the G-protein coupled receptor 1 family. High expression in adult and fetal heart tissue. Expressed in the brain, with enrichment in the accumbens, amygdala, cerebellum, cortex, and hippocampus regions.

It localises to the cell membrane. Functionally, orphan G-protein coupled receptor. Seems to act through a G(i)/G(o) mediated pathway. May be involved in ciliogenesis. In Homo sapiens (Human), this protein is G-protein coupled receptor 22.